The chain runs to 329 residues: Peroxidase 58 (329 aa).

A signal peptide spans M1 to A23. Cystine bridges form between C34/C116, C67/C72, C122/C325, and C201/C234. N36 carries an N-linked (GlcNAc...) asparagine glycan. H65 functions as the Proton acceptor in the catalytic mechanism. Residues D66, V69, G71, D73, and S75 each contribute to the Ca(2+) site. P164 is a binding site for substrate. H194 is a binding site for heme b. A Ca(2+)-binding site is contributed by T195. N210 is a glycosylation site (N-linked (GlcNAc...) asparagine). Ca(2+) contacts are provided by D247, S250, and D255.

It belongs to the peroxidase family. Classical plant (class III) peroxidase subfamily. Heme b is required as a cofactor. The cofactor is Ca(2+).

The protein localises to the secreted. The catalysed reaction is 2 a phenolic donor + H2O2 = 2 a phenolic radical donor + 2 H2O. Its function is as follows. Removal of H(2)O(2), oxidation of toxic reductants, biosynthesis and degradation of lignin, suberization, auxin catabolism, response to environmental stresses such as wounding, pathogen attack and oxidative stress. These functions might be dependent on each isozyme/isoform in each plant tissue. The chain is Peroxidase 58 (PER58) from Arabidopsis thaliana (Mouse-ear cress).